Here is a 236-residue protein sequence, read N- to C-terminus: Protein YIPF6 (236 aa).

Alanine 2 carries the post-translational modification N-acetylalanine. Residues 2-84 (AEAEDSPGEQ…HVLYPRKSNT (83 aa)) lie on the Cytoplasmic side of the membrane. Serine 7 is subject to Phosphoserine. Residues 85–105 (LLRDWDLWGPLILCVSLALML) form a helical membrane-spanning segment. Residues 106-116 (QKSSVEGKRDG) are Lumenal-facing. The chain crosses the membrane as a helical span at residues 117 to 137 (GSPEFAEVFVIIWFGAVTITL). At 138–147 (NSKLLGGNIS) the chain is on the cytoplasmic side. Residues 148-168 (FFQSLCVLGYCVLPLNIAMLI) traverse the membrane as a helical segment. The Lumenal segment spans residues 169-185 (CRLLLLAGQGPINFMIR). A helical membrane pass occupies residues 186-206 (LFVVLVMFAWSVIASTAFLAD). The Cytoplasmic portion of the chain corresponds to 207–213 (CQPPNRK). A helical transmembrane segment spans residues 214–234 (ALAVYPVFLFYFVVSWMILTF). The Lumenal portion of the chain corresponds to 235–236 (TP).

Belongs to the YIP1 family. As to quaternary structure, predominantly interacts with YIPF1 or YIPF2, but may also form a ternary complex with YIPF1 and YIPF2. This interaction may stabilize YIPF1 and YIPF2.

It localises to the golgi apparatus membrane. Functionally, may be required for stable YIPF1 and YIPF2 protein expression. The sequence is that of Protein YIPF6 (Yipf6) from Rattus norvegicus (Rat).